Consider the following 262-residue polypeptide: Acyl-[acyl-carrier-protein]--UDP-N-acetylglucosamine O-acyltransferase (262 aa).

This sequence belongs to the transferase hexapeptide repeat family. LpxA subfamily. In terms of assembly, homotrimer.

It is found in the cytoplasm. The enzyme catalyses a (3R)-hydroxyacyl-[ACP] + UDP-N-acetyl-alpha-D-glucosamine = a UDP-3-O-[(3R)-3-hydroxyacyl]-N-acetyl-alpha-D-glucosamine + holo-[ACP]. It participates in glycolipid biosynthesis; lipid IV(A) biosynthesis; lipid IV(A) from (3R)-3-hydroxytetradecanoyl-[acyl-carrier-protein] and UDP-N-acetyl-alpha-D-glucosamine: step 1/6. Its function is as follows. Involved in the biosynthesis of lipid A, a phosphorylated glycolipid that anchors the lipopolysaccharide to the outer membrane of the cell. The sequence is that of Acyl-[acyl-carrier-protein]--UDP-N-acetylglucosamine O-acyltransferase from Shigella flexneri serotype 5b (strain 8401).